We begin with the raw amino-acid sequence, 1620 residues long: Myb-like protein X (1620 aa).

The span at 1-13 shows a compositional bias: polar residues; that stretch reads MSTIGNNASSIGN. 4 disordered regions span residues 1 to 57, 176 to 204, 294 to 318, and 450 to 849; these read MSTI…TTTT, TGSG…SNIG, FFQD…NMTE, and KEEK…TKSA. Positions 28–57 are enriched in low complexity; it reads PPTTTTTTTTTTTTTTTTPTTTTPTTTTTT. The segment covering 177–187 has biased composition (gly residues); the sequence is GSGGIGGGGSG. The region spanning 310 to 421 is the SWIRM domain; that stretch reads GSGSNNMTEI…CFVNSGDYMN (112 aa). Residues 450–497 show a composition bias toward basic and acidic residues; that stretch reads KEEKERLEREEKERLEREEKQEKEEKERLEKEEKERLEREEKQEKEEK. Residues 498-511 are compositionally biased toward acidic residues; the sequence is EEKEEKEENEEKEE. Basic and acidic residues predominate over residues 512–568; the sequence is KEEKEKEEKEEKEKQEKEDDKEKQENENEQEKIEKKENKNDSQNKEIKENHDKKDET. A compositionally biased stretch (low complexity) spans 570-598; sequence DSNNTTTTTTTTTTTSTNTLVAESSSSSS. Positions 606–628 are enriched in basic and acidic residues; the sequence is KEMKEQPVQENKDKEMMETDTTK. Low complexity predominate over residues 629–645; that stretch reads ENNGVETTETTNQTTDS. Residues 647–798 show a composition bias toward basic and acidic residues; the sequence is ETDKEMKDQP…EIKKDKLKEN (152 aa). Residues 799–834 are compositionally biased toward acidic residues; the sequence is EEVEGEIEGENDEGEVVEEDEDEEMEIEEDEEDEED. One can recognise an SANT domain in the interval 925–977; that stretch reads PEEFGWTDIETLLLLEGIEIFRDNWQEISDYIGGSKTPEQCLTHFIRLPIEDE. Positions 1049–1506 are disordered; sequence QPSKEELERI…DDDEDVEMET (458 aa). Basic and acidic residues-rich tracts occupy residues 1051 to 1195, 1219 to 1255, and 1264 to 1302; these read SKEE…DKSD, ETVE…KDDN, and HNKE…EKDL. Low complexity predominate over residues 1303 to 1325; that stretch reads NNLSESQSSNDQSKSNEQMSSDN. Polar residues predominate over residues 1338-1350; it reads TQITSKEQNITTD. Composition is skewed to low complexity over residues 1358–1382 and 1390–1416; these read TPTT…TTNT and NETN…ESNN. Acidic residues-rich tracts occupy residues 1467 to 1481 and 1493 to 1504; these read EENE…ENDL and VGEEDDDEDVEM.

It is found in the nucleus. This Dictyostelium discoideum (Social amoeba) protein is Myb-like protein X (mybX).